The chain runs to 303 residues: Acetylglutamate kinase (303 aa).

Residues 68–69, R90, and N194 contribute to the substrate site; that span reads GG.

This sequence belongs to the acetylglutamate kinase family. ArgB subfamily.

The protein resides in the cytoplasm. It catalyses the reaction N-acetyl-L-glutamate + ATP = N-acetyl-L-glutamyl 5-phosphate + ADP. It functions in the pathway amino-acid biosynthesis; L-arginine biosynthesis; N(2)-acetyl-L-ornithine from L-glutamate: step 2/4. Functionally, catalyzes the ATP-dependent phosphorylation of N-acetyl-L-glutamate. In Psychrobacter arcticus (strain DSM 17307 / VKM B-2377 / 273-4), this protein is Acetylglutamate kinase.